Consider the following 46-residue polypeptide: uncharacterized protein (46 aa).

Positions 1–46 are disordered; it reads MNFGIKPDVSSGPRKGGPFKELSDFSKTSPTPQQPRSLSGKSVMLP. Residues 25–40 are compositionally biased toward polar residues; sequence FSKTSPTPQQPRSLSG.

This is an uncharacterized protein from Dictyostelium discoideum (Social amoeba).